The primary structure comprises 304 residues: Nod factor export ATP-binding protein I (304 aa).

One can recognise an ABC transporter domain in the interval 6–236 (IDFRNVEKRY…EIGCDVIEIY (231 aa)). An ATP-binding site is contributed by 38–45 (GPNGAGKT).

It belongs to the ABC transporter superfamily. Lipooligosaccharide exporter (TC 3.A.1.102) family. As to quaternary structure, the complex is composed of two ATP-binding proteins (NodI) and two transmembrane proteins (NodJ).

The protein localises to the cell inner membrane. Functionally, part of the ABC transporter complex NodIJ involved in the export of the nodulation factors (Nod factors), the bacterial signal molecules that induce symbiosis and subsequent nodulation induction. Nod factors are LCO (lipo-chitin oligosaccharide), a modified beta-1,4-linked N-acetylglucosamine oligosaccharide. This subunit is responsible for energy coupling to the transport system. The sequence is that of Nod factor export ATP-binding protein I from Burkholderia orbicola (strain AU 1054).